The sequence spans 289 residues: uncharacterized protein (289 aa).

This is an uncharacterized protein from Schizosaccharomyces pombe (strain 972 / ATCC 24843) (Fission yeast).